The following is a 211-amino-acid chain: MAVVDLKARPRAGRGKGYRNRLKQNGLIPAVIYGKEVGSLLLEVETRAVQDILTKTGRNALIQLRVEPEKGRAKKYDAIIKDVHMHPYKNEFFHVDFHQISLKDELTTSVNLKLTGSAPGVTAGGRLEQLIRQVEVSCLPRNIPDHIEVDVSGLGIGDAIHVSDLKAPEGVKFETDGDVTVVTLIAPHREEEKAPEETGEAAPAPTPETGQ.

Positions histidine 188–glutamine 211 are disordered. Residues glutamate 200 to glutamine 211 are compositionally biased toward low complexity.

It belongs to the bacterial ribosomal protein bL25 family. CTC subfamily. In terms of assembly, part of the 50S ribosomal subunit; part of the 5S rRNA/L5/L18/L25 subcomplex. Contacts the 5S rRNA. Binds to the 5S rRNA independently of L5 and L18.

Its function is as follows. This is one of the proteins that binds to the 5S RNA in the ribosome where it forms part of the central protuberance. In Desulforudis audaxviator (strain MP104C), this protein is Large ribosomal subunit protein bL25.